We begin with the raw amino-acid sequence, 397 residues long: Enoyl-[acyl-carrier-protein] reductase [NADH] (397 aa).

NAD(+)-binding positions include 48-53 (GASTGY), 74-75 (LE), 111-112 (DA), and 139-140 (LA). Y225 provides a ligand contact to substrate. Residue Y235 is the Proton donor of the active site. NAD(+) is bound by residues K244 and 273-275 (VVT).

The protein belongs to the TER reductase family. In terms of assembly, monomer.

The catalysed reaction is a 2,3-saturated acyl-[ACP] + NAD(+) = a (2E)-enoyl-[ACP] + NADH + H(+). It functions in the pathway lipid metabolism; fatty acid biosynthesis. Involved in the final reduction of the elongation cycle of fatty acid synthesis (FAS II). Catalyzes the reduction of a carbon-carbon double bond in an enoyl moiety that is covalently linked to an acyl carrier protein (ACP). The protein is Enoyl-[acyl-carrier-protein] reductase [NADH] of Tolumonas auensis (strain DSM 9187 / NBRC 110442 / TA 4).